The following is a 643-amino-acid chain: Phosphomethylpyrimidine synthase (643 aa).

Residues Asn248, Met277, Tyr306, His342, 362–364 (SRG), 403–406 (DGLR), and Glu442 each bind substrate. Position 446 (His446) interacts with Zn(2+). Tyr469 serves as a coordination point for substrate. A Zn(2+)-binding site is contributed by His510. [4Fe-4S] cluster contacts are provided by Cys590, Cys593, and Cys598.

Belongs to the ThiC family. Homodimer. It depends on [4Fe-4S] cluster as a cofactor.

It catalyses the reaction 5-amino-1-(5-phospho-beta-D-ribosyl)imidazole + S-adenosyl-L-methionine = 4-amino-2-methyl-5-(phosphooxymethyl)pyrimidine + CO + 5'-deoxyadenosine + formate + L-methionine + 3 H(+). Its pathway is cofactor biosynthesis; thiamine diphosphate biosynthesis. Catalyzes the synthesis of the hydroxymethylpyrimidine phosphate (HMP-P) moiety of thiamine from aminoimidazole ribotide (AIR) in a radical S-adenosyl-L-methionine (SAM)-dependent reaction. This chain is Phosphomethylpyrimidine synthase, found in Paraburkholderia phytofirmans (strain DSM 17436 / LMG 22146 / PsJN) (Burkholderia phytofirmans).